A 464-amino-acid chain; its full sequence is Phosphoglucosamine mutase (464 aa).

The active-site Phosphoserine intermediate is S112. The Mg(2+) site is built by S112, D252, D254, and D256. At S112 the chain carries Phosphoserine.

The protein belongs to the phosphohexose mutase family. The cofactor is Mg(2+). Post-translationally, activated by phosphorylation.

The enzyme catalyses alpha-D-glucosamine 1-phosphate = D-glucosamine 6-phosphate. Catalyzes the conversion of glucosamine-6-phosphate to glucosamine-1-phosphate. The chain is Phosphoglucosamine mutase from Synechococcus sp. (strain CC9902).